Here is a 260-residue protein sequence, read N- to C-terminus: Acetylglutamate kinase (260 aa).

Residues 46 to 47, arginine 68, and asparagine 160 contribute to the substrate site; that span reads GG.

This sequence belongs to the acetylglutamate kinase family. ArgB subfamily.

It localises to the cytoplasm. The catalysed reaction is N-acetyl-L-glutamate + ATP = N-acetyl-L-glutamyl 5-phosphate + ADP. Its pathway is amino-acid biosynthesis; L-arginine biosynthesis; N(2)-acetyl-L-ornithine from L-glutamate: step 2/4. Catalyzes the ATP-dependent phosphorylation of N-acetyl-L-glutamate. The polypeptide is Acetylglutamate kinase (Shewanella sp. (strain W3-18-1)).